Consider the following 473-residue polypeptide: GTPase Der (473 aa).

2 EngA-type G domains span residues 3 to 167 (FKVA…KGLE) and 203 to 378 (LRVA…TFWN). GTP is bound by residues 9–16 (GRPNVGKS), 56–60 (DTAGL), 119–122 (NKCE), 209–216 (GRPNVGKS), 256–260 (DTAGM), and 321–324 (NKWD). The KH-like domain maps to 379–463 (ARVPTARLNR…PIRLFMRKTH (85 aa)).

Belongs to the TRAFAC class TrmE-Era-EngA-EngB-Septin-like GTPase superfamily. EngA (Der) GTPase family. Associates with the 50S ribosomal subunit.

Its function is as follows. GTPase that plays an essential role in the late steps of ribosome biogenesis. The sequence is that of GTPase Der from Parvibaculum lavamentivorans (strain DS-1 / DSM 13023 / NCIMB 13966).